We begin with the raw amino-acid sequence, 1102 residues long: Ubiquitin carboxyl-terminal hydrolase 7 (1102 aa).

The segment covering 1–10 has biased composition (low complexity); it reads MNHQQQQQQQ. A disordered region spans residues 1–38; sequence MNHQQQQQQQKAGEQQLSEPEDMEMEAGDTDDPPRITQ. The interval 1–208 is interaction with TSPYL5; it reads MNHQQQQQQQ…APHGVAWDSK (208 aa). The residue at position 18 (serine 18) is a Phosphoserine. The span at 19-31 shows a compositional bias: acidic residues; the sequence is EPEDMEMEAGDTD. Phosphoserine is present on serine 49. The interval 53–208 is interaction with p53/TP53, MDM2 and EBNA1; it reads NTAEEDMEDD…APHGVAWDSK (156 aa). The MATH domain maps to 68 to 195; the sequence is EATFQFTVER…DDKVTFEVFV (128 aa). The tract at residues 70–205 is necessary for nuclear localization; sequence TFQFTVERFS…QADAPHGVAW (136 aa). The USP domain occupies 214–521; it reads VGLKNQGATC…NAYMLVYIRE (308 aa). Cysteine 223 acts as the Nucleophile in catalysis. Histidine 464 functions as the Proton acceptor in the catalytic mechanism. An interaction with ICP0/VMW110 region spans residues 622-801; it reads LWPMQARSNG…HRVDVIFCDK (180 aa). At lysine 869 the chain carries N6-acetyllysine; alternate. Residue lysine 869 forms a Glycyl lysine isopeptide (Lys-Gly) (interchain with G-Cter in SUMO2); alternate linkage. Lysine 869 participates in a covalent cross-link: Glycyl lysine isopeptide (Lys-Gly) (interchain with G-Cter in ubiquitin); alternate. Lysine 882 participates in a covalent cross-link: Glycyl lysine isopeptide (Lys-Gly) (interchain with G-Cter in SUMO2). Serine 963 is modified (phosphoserine). Lysine 1084 and lysine 1096 each carry N6-acetyllysine.

Belongs to the peptidase C19 family. As to quaternary structure, monomer. Homodimer. Part of a complex with DAXX, MDM2, RASSF1 and USP7. Part of a complex with DAXX, MDM2 and USP7. Interacts with MDM2; the interaction is independent of p53/TP53. Interacts with DAXX; the interaction is direct and independent of MDM2 and p53/TP53. Component of a complex composed of KMT2E/MLL5 (isoform 3), OGT (isoform 1) and USP7; the complex stabilizes KMT2E/MLL5, preventing KMT2E/MLL5 ubiquitination and proteasomal-mediated degradation. Interacts (via MATH domain) with KMT2E/MLL5 isoform 3. Interacts with OGT isoform 1. Interacts with FOXO4; the interaction is enhanced in presence of hydrogen peroxide and occurs independently of p53/TP53. Interacts with p53/TP53; the interaction is enhanced in response to DNA damage. Interacts with TSPYL5; this impairs interaction with p53/TP53. Interacts with PTEN; the interaction is direct. Interacts with ATXN1 and the strength of interaction is influenced by the length of the poly-Gln region in ATXN1. A weaker interaction seen with mutants having longer poly-Gln regions. Interacts with KIAA1530/UVSSA. Interacts with ABRAXAS2; the interaction is direct. Identified in a complex with TP53/p53 and ABRAXAS2. Interacts with MEX3C and antagonizes its ability to degrade mRNA. Interacts with DNMT1 and UHRF1. Interacts with FOXP3. Interacts (via MATH domain) with RNF220. Associated component of the Polycomb group (PcG) multiprotein PRC1-like complex. Interacts with EPOP. Interacts with OTUD4 and USP9X; the interaction is direct. Interacts with CRY2. Interacts with REST. Interacts with ERCC6. Part of a complex consisting of USP7, MAGEL2 and TRIM27; directly interacts with MAGEL2; directly interacts with TRIM27. (Microbial infection) Isoform 1 and isoform 2 interact with herpesvirus 1 trans-acting transcriptional protein ICP0/VMW110. Binding to ICP0/VMW110 may modulate the substrate specificity or activity of USP7 to stabilize viral proteins. In terms of assembly, (Microbial infection) Interacts with Epstein-Barr virus EBNA1; the interaction is independent and simultaneous to EBNA1 interaction with USP7 as well as necessary for PML nuclear bodies disruption by EBNA1. EBNA1, USP7 and CSNK2B form a ternary complex. EBNA1 shows a 10-fold higher affinity than p53/TP53 and can compete with it for USP7 binding. As to quaternary structure, (Microbial infection) Interacts with human cytomegalovirus proteins UL35 and UL35A; these interactions inhibit the ability of USP7 to form nuclear bodies. (Microbial infection) Interacts with herpes virus 8/HHV-8 proteins vIRF-1 and vIRF-3; these interactions may disrupt TP53 signaling pathway during viral infection by decreasing the availability of USP7 for deubiquitinating and stabilizing TP53. In terms of assembly, (Microbial infection) Interacts with herpes virus 8/HHV-8 protein vIRF-2; this interaction modulates antiviral signaling via disruption of USP7 interactions with innate immune signaling proteins TRAF3 and TRAF6 thus affecting their ubiquitination. Post-translationally, isoform 1: Phosphorylated. Isoform 1 is phosphorylated at positions Ser-18 and Ser-963. Isoform 2: Not phosphorylated. Isoform 1: Polyneddylated. Isoform 2: Not Polyneddylated. In terms of processing, isoform 1 and isoform 2: Not sumoylated. Post-translationally, isoform 1 and isoform 2: Polyubiquitinated by herpesvirus 1 trans-acting transcriptional protein ICP0/VMW110; leading to its subsequent proteasomal degradation. Isoform 1: Ubiquitinated at Lys-869. In terms of tissue distribution, expressed in neural progenitor cells (at protein level). Widely expressed. Overexpressed in prostate cancer.

Its subcellular location is the nucleus. It localises to the cytoplasm. The protein localises to the PML body. The protein resides in the chromosome. The enzyme catalyses Thiol-dependent hydrolysis of ester, thioester, amide, peptide and isopeptide bonds formed by the C-terminal Gly of ubiquitin (a 76-residue protein attached to proteins as an intracellular targeting signal).. With respect to regulation, inhibited by N-ethyl-maleimide (NEM) and divalent cations. Tolerates high concentrations of NaCl but is inhibited at concentrations of 195 mM and higher. In terms of biological role, hydrolase that deubiquitinates target proteins such as ARMC5, FOXO4, DEPTOR, KAT5, p53/TP53, MDM2, ERCC6, DNMT1, UHRF1, PTEN, KMT2E/MLL5 and DAXX. Together with DAXX, prevents MDM2 self-ubiquitination and enhances the E3 ligase activity of MDM2 towards p53/TP53, thereby promoting p53/TP53 ubiquitination and proteasomal degradation. Deubiquitinates p53/TP53, preventing degradation of p53/TP53, and enhances p53/TP53-dependent transcription regulation, cell growth repression and apoptosis. Deubiquitinates p53/TP53 and MDM2 and strongly stabilizes p53/TP53 even in the presence of excess MDM2, and also induces p53/TP53-dependent cell growth repression and apoptosis. Deubiquitination of FOXO4 in presence of hydrogen peroxide is not dependent on p53/TP53 and inhibits FOXO4-induced transcriptional activity. In association with DAXX, is involved in the deubiquitination and translocation of PTEN from the nucleus to the cytoplasm, both processes that are counteracted by PML. Deubiquitinates KMT2E/MLL5 preventing KMT2E/MLL5 proteasomal-mediated degradation. Involved in cell proliferation during early embryonic development. Involved in transcription-coupled nucleotide excision repair (TC-NER) in response to UV damage: recruited to DNA damage sites following interaction with KIAA1530/UVSSA and promotes deubiquitination of ERCC6, preventing UV-induced degradation of ERCC6. Involved in maintenance of DNA methylation via its interaction with UHRF1 and DNMT1: acts by mediating deubiquitination of UHRF1 and DNMT1, preventing their degradation and promoting DNA methylation by DNMT1. Deubiquitinates alkylation repair enzyme ALKBH3. OTUD4 recruits USP7 and USP9X to stabilize ALKBH3, thereby promoting the repair of alkylated DNA lesions. Acts as a chromatin regulator via its association with the Polycomb group (PcG) multiprotein PRC1-like complex; may act by deubiquitinating components of the PRC1-like complex. Able to mediate deubiquitination of histone H2B; it is however unsure whether this activity takes place in vivo. Exhibits a preference towards 'Lys-48'-linked ubiquitin chains. Increases regulatory T-cells (Treg) suppressive capacity by deubiquitinating and stabilizing the transcription factor FOXP3 which is crucial for Treg cell function. Plays a role in the maintenance of the circadian clock periodicity via deubiquitination and stabilization of the CRY1 and CRY2 proteins. Deubiquitinates REST, thereby stabilizing REST and promoting the maintenance of neural progenitor cells. Deubiquitinates SIRT7, inhibiting SIRT7 histone deacetylase activity and regulating gluconeogenesis. Involved in the regulation of WASH-dependent actin polymerization at the surface of endosomes and the regulation of endosomal protein recycling. It maintains optimal WASH complex activity and precise F-actin levels via deubiquitination of TRIM27 and WASHC1. Mediates the deubiquitination of phosphorylated DEPTOR, promoting its stability and leading to decreased mTORC1 signaling. Functionally, (Microbial infection) Contributes to the overall stabilization and trans-activation capability of the herpesvirus 1 trans-acting transcriptional protein ICP0/VMW110 during HSV-1 infection. Its function is as follows. (Microbial infection) Upon infection with Epstein-Barr virus, the interaction with viral EBNA1 increases the association of USP7 with PML proteins, which is required for the polyubiquitylation and degradation of PML. This is Ubiquitin carboxyl-terminal hydrolase 7 from Homo sapiens (Human).